The primary structure comprises 121 residues: Small ribosomal subunit protein uS13 (121 aa).

Residues 93-121 form a disordered region; it reads KGLPMRGQRTRTNARTRKGPRRAAQALKK.

It belongs to the universal ribosomal protein uS13 family. In terms of assembly, part of the 30S ribosomal subunit. Forms a loose heterodimer with protein S19. Forms two bridges to the 50S subunit in the 70S ribosome.

Its function is as follows. Located at the top of the head of the 30S subunit, it contacts several helices of the 16S rRNA. In the 70S ribosome it contacts the 23S rRNA (bridge B1a) and protein L5 of the 50S subunit (bridge B1b), connecting the 2 subunits; these bridges are implicated in subunit movement. Contacts the tRNAs in the A and P-sites. The polypeptide is Small ribosomal subunit protein uS13 (Burkholderia ambifaria (strain ATCC BAA-244 / DSM 16087 / CCUG 44356 / LMG 19182 / AMMD) (Burkholderia cepacia (strain AMMD))).